A 624-amino-acid polypeptide reads, in one-letter code: ABC transporter G family member 23 (624 aa).

An ABC transporter domain is found at 52-296 (LTVTNLSYTI…IAKLGFQIPE (245 aa)). 84–91 (GPSGTGKS) contributes to the ATP binding site. The region spanning 350-560 (TEISYLCSRF…PLESMVVNEY (211 aa)) is the ABC transmembrane type-2 domain. Helical transmembrane passes span 369-389 (LFLARTMQAVVAGLGLGSVYT), 402-422 (LGLFAFSLSFLLSSTVEALPI), 450-470 (IAFVPFLFVVSLLFSIPVYWI), 480-500 (FSFFVLCVWLIILMASSLVLF), 511-531 (GNSLICTVLGAFFLFSGYFIP), and 595-615 (INVGIMLAFFVFYRILCWGIL).

The protein belongs to the ABC transporter superfamily. ABCG family. Eye pigment precursor importer (TC 3.A.1.204) subfamily.

The protein localises to the membrane. The protein is ABC transporter G family member 23 (ABCG23) of Arabidopsis thaliana (Mouse-ear cress).